An 807-amino-acid chain; its full sequence is Maternal DNA replication licensing factor mcm3 (807 aa).

An MCM domain is found at 295–502 (IFEHLSKSLA…NDQEIADHVL (208 aa)). 345-352 (GDPSVAKS) is an ATP binding site. The Arginine finger signature appears at 477-480 (SRFD). Basic and acidic residues predominate over residues 664–673 (KTDKDLHDEN). The tract at residues 664 to 741 (KTDKDLHDEN…QDGKRSLSQN (78 aa)) is disordered. The span at 707–723 (FSEQDSSLNENLSQSLR) shows a compositional bias: polar residues. Basic and acidic residues predominate over residues 727–741 (KKAESQDGKRSLSQN).

This sequence belongs to the MCM family. As to quaternary structure, component of the mcm2-7 complex (RLF-M). The complex forms a toroidal hexameric ring with the proposed subunit order mcm2-mcm6-mcm4-mcm7-mcm3-mcm5. The heterodimer of mmcm3/mcm5 interacts with mcm4, mmcm6, mcm7 and weakly with mcm2. Interacts with mcm7, though this interaction may not be direct, and remains in a complex with mcm7 throughout the cell cycle. Component of the CMG helicase complex, composed of the mcm2-7 complex, the GINS complex and cdc45.

It localises to the nucleus. It is found in the chromosome. It catalyses the reaction ATP + H2O = ADP + phosphate + H(+). Its function is as follows. Acts as a component of the mcm2-7 complex (mcm complex) which is the putative replicative helicase essential for 'once per cell cycle' DNA replication initiation and elongation in eukaryotic cells. The active ATPase sites in the mcm2-7 ring are formed through the interaction surfaces of two neighboring subunits such that a critical structure of a conserved arginine finger motif is provided in trans relative to the ATP-binding site of the Walker A box of the adjacent subunit. The six ATPase active sites, however, are likely to contribute differentially to the complex helicase activity. The existence of maternal and zygotic forms of mcm3 and mcm6 suggests that specific forms of mcm2-7 complexes may be used during different stages of development. In Xenopus laevis (African clawed frog), this protein is Maternal DNA replication licensing factor mcm3 (mmcm3).